Reading from the N-terminus, the 157-residue chain is Recombination endonuclease VII (157 aa).

Zn(2+) contacts are provided by C23 and C26. D40 is a binding site for Ca(2+). C58 and C61 together coordinate Zn(2+). N62 contributes to the Ca(2+) binding site.

In terms of assembly, homodimer. Ca(2+) serves as cofactor. It depends on Zn(2+) as a cofactor.

Functionally, cleaves DNA cruciform and Y-structures as well as heteroduplex loops. Resolves Holliday junctions, recognizes a broad spectrum of DNA substrates ranging from branched DNAs to single base mismatches. The sequence is that of Recombination endonuclease VII (49) from Enterobacteria phage T4 (Bacteriophage T4).